Reading from the N-terminus, the 816-residue chain is Sucrose synthase 2 (816 aa).

The residue at position 15 (Ser-15) is a Phosphoserine. A GT-B glycosyltransferase region spans residues Met-280 to Thr-757.

It belongs to the glycosyltransferase 1 family. Plant sucrose synthase subfamily.

The enzyme catalyses an NDP-alpha-D-glucose + D-fructose = a ribonucleoside 5'-diphosphate + sucrose + H(+). Functionally, sucrose-cleaving enzyme that provides UDP-glucose and fructose for various metabolic pathways. The sequence is that of Sucrose synthase 2 (SUS1) from Zea mays (Maize).